We begin with the raw amino-acid sequence, 139 residues long: MLMPKRVKYRKTQRGRMKGNAGRGTSVAFGSFGLKAMEPAWITSRQIEAARIAMTRYMKRDGKVWIRIFPDKPVTQKPAETRMGSGKGSPEFWVAVVKPGRVMFEADGVSKEIATEAFRLAAKKLPIKTKFIIRPDYEG.

Belongs to the universal ribosomal protein uL16 family. Part of the 50S ribosomal subunit.

Binds 23S rRNA and is also seen to make contacts with the A and possibly P site tRNAs. This chain is Large ribosomal subunit protein uL16, found in Chlorobium chlorochromatii (strain CaD3).